Consider the following 656-residue polypeptide: uncharacterized protein (656 aa).

Residues 623–656 (EIDIPGTPASIDPEWSRPPGSITDDHVFDAPLHR) are disordered. A compositionally biased stretch (basic and acidic residues) spans 645–656 (TDDHVFDAPLHR).

This is an uncharacterized protein from Mycobacterium tuberculosis (strain CDC 1551 / Oshkosh).